Reading from the N-terminus, the 344-residue chain is MTSLSWQQTLSAMDVDDIVSLLAAAERADGTGPVSEDVRLALRPGLRIGAGRHLLAVSAAADTSGPNVPDTPGDQNAADTSTMPGRVPAGRIIGYAHLGGVDQARQAEVVVHPDHRGRGVGTALVGGLTEALAAPSSRLDIWAHGDLPAAAALATRLTFTRTRVLLQLRRPLAAGTPLPDPRLPAGVTVRTFVPDQDDRAWLAVNAAAFADHPEQGRWTLDDLARRRAEPWFDPRGFFLAEHDGALVGFHWTKVHETDQTPPRNAQPGPIGEVYVVGVLPGAGGAGLGRALTLIGLRHLQAEGLDSVLLYVDEDNVRAVRMYTGLGFITYVRDVSYHWERPSTG.

E36 lines the 1D-myo-inositol 2-(L-cysteinylamino)-2-deoxy-alpha-D-glucopyranoside pocket. 2 N-acetyltransferase domains span residues 40 to 179 (LALR…TPLP) and 187 to 344 (VTVR…PSTG). The interval 61–83 (ADTSGPNVPDTPGDQNAADTSTM) is disordered. The segment covering 73–83 (GDQNAADTSTM) has biased composition (polar residues). Residue 109 to 111 (VVV) coordinates acetyl-CoA. 1D-myo-inositol 2-(L-cysteinylamino)-2-deoxy-alpha-D-glucopyranoside-binding residues include E214, K253, and E272. Residues 276-278 (VGV) and 283-289 (GGAGLGR) each bind acetyl-CoA. A 1D-myo-inositol 2-(L-cysteinylamino)-2-deoxy-alpha-D-glucopyranoside-binding site is contributed by Y310. Position 315–320 (315–320 (NVRAVR)) interacts with acetyl-CoA.

It belongs to the acetyltransferase family. MshD subfamily. Monomer.

It catalyses the reaction 1D-myo-inositol 2-(L-cysteinylamino)-2-deoxy-alpha-D-glucopyranoside + acetyl-CoA = mycothiol + CoA + H(+). Catalyzes the transfer of acetyl from acetyl-CoA to desacetylmycothiol (Cys-GlcN-Ins) to form mycothiol. This is Mycothiol acetyltransferase from Frankia casuarinae (strain DSM 45818 / CECT 9043 / HFP020203 / CcI3).